The sequence spans 401 residues: MSHRKFSAPRHGHMGFTPKKRSRTYRGRIKAFPKDDASKPIHLTAFLGYKAGMTHIVRDVDKPGSKVNKKEVVEAVSIIETPPMVIAGVTGYIDTPQGPRALTTIWAEHLSEEARRRFYSNWAKSKKKAFTKYAKKWQDEDGKKLIEADFAKLKKYCSSIRVIAHTQMKILRRRQKKAHLVEIQINGGTIEQKVDWAREHLEKQIQVDTVFSQDEMIDTIGVTKGHGFKGVTSRWHTKKLPRKTHKGLRKVACIGAWHPSRVAFTVARAGQKGFHHRTIINNKIYRIGKSALTEEGKNNGSTEFDLTQKTINPMGGFPRYGLVNQDYVMLRGAILGPKKRLITLRKSLITQTKRVAHEKINLKWIDTSSKTGHGRFQTTAEKRAFMGKLKRDFLAEAENKA.

The disordered stretch occupies residues 1–21 (MSHRKFSAPRHGHMGFTPKKR).

It belongs to the universal ribosomal protein uL3 family.

The protein localises to the cytoplasm. Its function is as follows. The L3 protein is a component of the large subunit of cytoplasmic ribosomes. In Caenorhabditis briggsae, this protein is Large ribosomal subunit protein uL3 (rpl-3).